Consider the following 1387-residue polypeptide: DNA-directed RNA polymerase subunit beta (1387 aa).

The protein belongs to the RNA polymerase beta chain family. In terms of assembly, the RNAP catalytic core consists of 2 alpha, 1 beta, 1 beta' and 1 omega subunit. When a sigma factor is associated with the core the holoenzyme is formed, which can initiate transcription.

The catalysed reaction is RNA(n) + a ribonucleoside 5'-triphosphate = RNA(n+1) + diphosphate. In terms of biological role, DNA-dependent RNA polymerase catalyzes the transcription of DNA into RNA using the four ribonucleoside triphosphates as substrates. This Xanthomonas campestris pv. campestris (strain ATCC 33913 / DSM 3586 / NCPPB 528 / LMG 568 / P 25) protein is DNA-directed RNA polymerase subunit beta.